A 568-amino-acid polypeptide reads, in one-letter code: ATP-dependent RNA helicase MRH4, mitochondrial (568 aa).

Residues 1–50 constitute a mitochondrion transit peptide; it reads MVSILAIRTFNPLGHFVSTQCVRAYAINSVRAGSKSSSVRAGSKNDTTRA. Residues 36–49 show a composition bias toward polar residues; the sequence is SSSVRAGSKNDTTR. The tract at residues 36–64 is disordered; it reads SSSVRAGSKNDTTRASSKKNKAGKSKLQL. The Q motif signature appears at 143 to 150; that stretch reads EIHPSPIQ. Positions 160–348 constitute a Helicase ATP-binding domain; sequence NLMEPKLQVH…TKMFPNAIPL (189 aa). 173–180 is a binding site for ATP; the sequence is AETGSGKT. Positions 296 to 299 match the DEAD box motif; the sequence is DEAD. Positions 379–568 constitute a Helicase C-terminal domain; the sequence is ALAQTLYAIA…TILKKNKALT (190 aa).

It belongs to the DEAD box helicase family. MRH4 subfamily.

Its subcellular location is the mitochondrion. It carries out the reaction ATP + H2O = ADP + phosphate + H(+). Functionally, ATP-binding RNA helicase involved in mitochondrial RNA metabolism. Required for maintenance of mitochondrial DNA. The sequence is that of ATP-dependent RNA helicase MRH4, mitochondrial (MRH4) from Candida glabrata (strain ATCC 2001 / BCRC 20586 / JCM 3761 / NBRC 0622 / NRRL Y-65 / CBS 138) (Yeast).